The primary structure comprises 183 residues: Capsid protein (183 aa).

The disordered stretch occupies residues 143-183 (LPETAVVRRRGRSPRRRTPSPRRRRSQSPRRRRSQSPASQC). The segment covering 149-176 (VRRRGRSPRRRTPSPRRRRSQSPRRRRS) has biased composition (basic residues). 3 positions are modified to phosphoserine; by host: serine 155, serine 162, and serine 170. The 1; half-length repeat unit spans residues 155-161 (SPRRRTP). The segment at 155–177 (SPRRRTPSPRRRRSQSPRRRRSQ) is 3 X 8 AA repeats of S-P-R-R-R-[PR]-S-Q. The Bipartite nuclear localization signal signature appears at 158–175 (RRTPSPRRRRSQSPRRRR). 2 consecutive repeat copies span residues 162 to 169 (SPRRRRSQ) and 170 to 177 (SPRRRRSQ). The RNA binding stretch occupies residues 177-183 (QSPASQC).

It belongs to the orthohepadnavirus core antigen family. In terms of assembly, homodimerizes, then multimerizes. Interacts with cytosol exposed regions of viral L glycoprotein present in the reticulum-to-Golgi compartment. Interacts with human FLNB. Phosphorylated form interacts with host importin alpha; this interaction depends on the exposure of the NLS, which itself depends upon genome maturation and/or phosphorylation of the capsid protein. Interacts with host NUP153. Phosphorylated by host SRPK1, SRPK2, and maybe protein kinase C or GAPDH. Phosphorylation is critical for pregenomic RNA packaging. Protein kinase C phosphorylation is stimulated by HBx protein and may play a role in transport of the viral genome to the nucleus at the late step during the viral replication cycle.

It is found in the virion. Its subcellular location is the host cytoplasm. In terms of biological role, self assembles to form an icosahedral capsid. Most capsids appear to be large particles with an icosahedral symmetry of T=4 and consist of 240 copies of capsid protein, though a fraction forms smaller T=3 particles consisting of 180 capsid proteins. Entering capsids are transported along microtubules to the nucleus. Phosphorylation of the capsid is thought to induce exposure of nuclear localization signal in the C-terminal portion of the capsid protein that allows binding to the nuclear pore complex via the importin (karyopherin-) alpha and beta. Capsids are imported in intact form through the nuclear pore into the nuclear basket, where it probably binds NUP153. Only capsids that contain the mature viral genome can release the viral DNA and capsid protein into the nucleoplasm. Immature capsids get stuck in the basket. Capsids encapsulate the pre-genomic RNA and the P protein. Pre-genomic RNA is reverse-transcribed into DNA while the capsid is still in the cytoplasm. The capsid can then either be directed to the nucleus, providing more genomes for transcription, or bud through the endoplasmic reticulum to provide new virions. This is Capsid protein from Gorilla gorilla (western gorilla).